Consider the following 273-residue polypeptide: MNNRVHQGHLARKRFGQNFLNDQFVIDSIVSAINPQKGQAMVEIGPGLAALTEPVGERLDQLTVIELDRDLAARLQTHPFLGPKLTIYQQDAMTFNFGELAEKMGQPLRVFGNLPYNISTPLMFHLFSYTDAIADMHFMLQKEVVNRLVAGPNSKAYGRLSVMAQYYCNVIPVLEVPPSAFTPPPKVDSAVVRLVPHATMPHPVKDIRVLSRITTEAFNQRRKTIRNSLGNLFSVEVLTGMGIDPAMRAENISVAQYCQMANYLAENAPLQES.

S-adenosyl-L-methionine is bound by residues N18, L20, G45, E66, D91, and N113.

This sequence belongs to the class I-like SAM-binding methyltransferase superfamily. rRNA adenine N(6)-methyltransferase family. RsmA subfamily.

The protein resides in the cytoplasm. The catalysed reaction is adenosine(1518)/adenosine(1519) in 16S rRNA + 4 S-adenosyl-L-methionine = N(6)-dimethyladenosine(1518)/N(6)-dimethyladenosine(1519) in 16S rRNA + 4 S-adenosyl-L-homocysteine + 4 H(+). Specifically dimethylates two adjacent adenosines (A1518 and A1519) in the loop of a conserved hairpin near the 3'-end of 16S rRNA in the 30S particle. May play a critical role in biogenesis of 30S subunits. In Shigella flexneri, this protein is Ribosomal RNA small subunit methyltransferase A.